We begin with the raw amino-acid sequence, 492 residues long: Catalase isozyme 2 (492 aa).

The segment at 1-32 (MDPYKFRPSSSNDTPFWTTNAGDPVSNNNSSM) is disordered. A compositionally biased stretch (polar residues) spans 8 to 32 (PSSSNDTPFWTTNAGDPVSNNNSSM). Active-site residues include His-65 and Asn-138. Tyr-348 is a binding site for heme.

The protein belongs to the catalase family. As to quaternary structure, homotetramer. Requires heme as cofactor. Abundant in hypocotyls and roots. Low levels are seen in the endosperms and cotyledons.

It localises to the peroxisome. The protein resides in the glyoxysome. It catalyses the reaction 2 H2O2 = O2 + 2 H2O. Functionally, occurs in almost all aerobically respiring organisms and serves to protect cells from the toxic effects of hydrogen peroxide. The protein is Catalase isozyme 2 (CAT2) of Ricinus communis (Castor bean).